A 292-amino-acid polypeptide reads, in one-letter code: Mycothiol acetyltransferase (292 aa).

2 N-acetyltransferase domains span residues 2–138 (AEVV…PSAP) and 141–292 (VTVR…YAHS). E33 provides a ligand contact to 1D-myo-inositol 2-(L-cysteinylamino)-2-deoxy-alpha-D-glucopyranoside. Residue 68–70 (AVV) coordinates acetyl-CoA. Positions 168, 215, and 225 each coordinate 1D-myo-inositol 2-(L-cysteinylamino)-2-deoxy-alpha-D-glucopyranoside. Acetyl-CoA contacts are provided by residues 229–231 (VAV) and 236–242 (QGRGLGR). Y263 contributes to the 1D-myo-inositol 2-(L-cysteinylamino)-2-deoxy-alpha-D-glucopyranoside binding site. 268–273 (NAAALH) is an acetyl-CoA binding site.

It belongs to the acetyltransferase family. MshD subfamily. In terms of assembly, monomer.

It catalyses the reaction 1D-myo-inositol 2-(L-cysteinylamino)-2-deoxy-alpha-D-glucopyranoside + acetyl-CoA = mycothiol + CoA + H(+). Catalyzes the transfer of acetyl from acetyl-CoA to desacetylmycothiol (Cys-GlcN-Ins) to form mycothiol. The polypeptide is Mycothiol acetyltransferase (Tsukamurella paurometabola (strain ATCC 8368 / DSM 20162 / CCUG 35730 / CIP 100753 / JCM 10117 / KCTC 9821 / NBRC 16120 / NCIMB 702349 / NCTC 13040) (Corynebacterium paurometabolum)).